Consider the following 373-residue polypeptide: Indole glucosinolate O-methyltransferase 3 (373 aa).

Gly217, Asp240, Asp260, Met261, and Lys274 together coordinate S-adenosyl-L-homocysteine. The active-site Proton acceptor is the His278.

It belongs to the class I-like SAM-binding methyltransferase superfamily. Cation-independent O-methyltransferase family.

It participates in secondary metabolite biosynthesis. In terms of biological role, involved in indole glucosinolate biosynthesis. Catalyzes methoxylation reactions of the glucosinolate indole ring. Converts the hydroxy intermediates 4-hydroxy-indol-3-yl-methylglucosinolate (4OH-I3M) and 1-hydroxy-indol-3-yl-methylglucosinolate (1OH-I3M) to 4-methoxy-indol-3-yl-methylglucosinolate (4MO-I3M) and 1-methoxy-indol-3-yl-methylglucosinolate(1MO-I3M), respectively. This Arabidopsis thaliana (Mouse-ear cress) protein is Indole glucosinolate O-methyltransferase 3.